The chain runs to 383 residues: 1-deoxy-D-xylulose 5-phosphate reductoisomerase (383 aa).

Residues Thr-10, Gly-11, Ser-12, Ile-13, Asn-38, and Asn-121 each contribute to the NADPH site. Lys-122 is a binding site for 1-deoxy-D-xylulose 5-phosphate. Glu-123 is a binding site for NADPH. Mn(2+) is bound at residue Asp-147. The 1-deoxy-D-xylulose 5-phosphate site is built by Ser-148, Glu-149, Ser-172, and His-195. Glu-149 is a Mn(2+) binding site. Gly-201 contacts NADPH. Ser-208, Asn-213, Lys-214, and Glu-217 together coordinate 1-deoxy-D-xylulose 5-phosphate. Glu-217 provides a ligand contact to Mn(2+).

The protein belongs to the DXR family. The cofactor is Mg(2+). Mn(2+) is required as a cofactor.

It carries out the reaction 2-C-methyl-D-erythritol 4-phosphate + NADP(+) = 1-deoxy-D-xylulose 5-phosphate + NADPH + H(+). The protein operates within isoprenoid biosynthesis; isopentenyl diphosphate biosynthesis via DXP pathway; isopentenyl diphosphate from 1-deoxy-D-xylulose 5-phosphate: step 1/6. Its function is as follows. Catalyzes the NADPH-dependent rearrangement and reduction of 1-deoxy-D-xylulose-5-phosphate (DXP) to 2-C-methyl-D-erythritol 4-phosphate (MEP). The sequence is that of 1-deoxy-D-xylulose 5-phosphate reductoisomerase from Vesicomyosocius okutanii subsp. Calyptogena okutanii (strain HA).